The chain runs to 933 residues: Melanoma-associated antigen E1 (933 aa).

Disordered regions lie at residues Met1–Gly113, Gly149–Leu236, Ser256–Thr282, and Thr360–Asn393. Basic residues predominate over residues Ser8–Gly23. 4 stretches are compositionally biased toward polar residues: residues Gly64–Thr97, Gly149–Pro166, Gly173–Ser184, and Ala219–Leu236. MAGE domains are found at residues Met467 to Ala666 and Leu721 to Ala912. An interaction with DTNA region spans residues Ser719 to Arg933.

Interacts with DTNA. Interacts with TRIM28.

It is found in the cytoplasm. The protein resides in the perinuclear region. It localises to the nucleus. The protein localises to the cell membrane. May enhance ubiquitin ligase activity of RING-type zinc finger-containing E3 ubiquitin-protein ligases. Proposed to act through recruitment and/or stabilization of the Ubl-conjugating enzyme (E2) at the E3:substrate complex. The protein is Melanoma-associated antigen E1 (Magee1) of Rattus norvegicus (Rat).